The primary structure comprises 540 residues: Fumonisin B1 esterase (540 aa).

S240 functions as the Acyl-ester intermediate in the catalytic mechanism. Catalysis depends on charge relay system residues E356 and H448. Residues 521-540 are disordered; sequence QVGSGEGLGVSPSKACQPSK.

It belongs to the type-B carboxylesterase/lipase family.

The enzyme catalyses fumonisin B1 + 2 H2O = 2 tricarballylate + (2S,3S,5R,10R,12S,14S,15R,16R)-2-amino-12,16-dimethylicosane-3,5,10,14,15-pentol + 2 H(+). Its function is as follows. Involved in degradation of fumonisin B1. Catalyzes the hydrolysis of fumonisin B1 (FB1) to aminopentol (HFB1). The chain is Fumonisin B1 esterase (fumD) from Sphingopyxis macrogoltabida (Sphingomonas macrogoltabidus).